Reading from the N-terminus, the 692-residue chain is uncharacterized protein (692 aa).

Response regulatory domains lie at 9 to 130 and 139 to 255; these read RVLY…LRMC and RILI…EYRM. 4-aspartylphosphate occurs at positions 58 and 188. Residues 299–432 form the GGDEF domain; sequence GVHGLVIIDV…GGNQAHVWSA (134 aa). The EAL domain maps to 443 to 691; the sequence is ESVIKRLVST…SFDFQHMSHD (249 aa).

This is an uncharacterized protein from Thiocystis violacea.